We begin with the raw amino-acid sequence, 377 residues long: O-phospho-L-seryl-tRNA:Cys-tRNA synthase (377 aa).

Residues 82-83 (AR), Asn189, and 212-214 (SGH) contribute to the pyridoxal 5'-phosphate site. Lys215 carries the N6-(pyridoxal phosphate)lysine modification.

The protein belongs to the SepCysS family. Homodimer. Interacts with SepRS. Requires pyridoxal 5'-phosphate as cofactor.

The catalysed reaction is O-phospho-L-seryl-tRNA(Cys) + hydrogen sulfide + H(+) = L-cysteinyl-tRNA(Cys) + phosphate. Converts O-phospho-L-seryl-tRNA(Cys) (Sep-tRNA(Cys)) to L-cysteinyl-tRNA(Cys) (Cys-tRNA(Cys)). This is O-phospho-L-seryl-tRNA:Cys-tRNA synthase from Methanocaldococcus jannaschii (strain ATCC 43067 / DSM 2661 / JAL-1 / JCM 10045 / NBRC 100440) (Methanococcus jannaschii).